The following is a 207-amino-acid chain: Ribonuclease HII (207 aa).

Residues 1–207 (MDVLGIDEAG…ATVEKMKNSQ (207 aa)) form the RNase H type-2 domain. A divalent metal cation contacts are provided by D7, E8, and D105.

The protein belongs to the RNase HII family. Mn(2+) is required as a cofactor. It depends on Mg(2+) as a cofactor.

The protein resides in the cytoplasm. It catalyses the reaction Endonucleolytic cleavage to 5'-phosphomonoester.. Its function is as follows. Endonuclease that specifically degrades the RNA of RNA-DNA hybrids. The polypeptide is Ribonuclease HII (Methanobrevibacter smithii (strain ATCC 35061 / DSM 861 / OCM 144 / PS)).